A 240-amino-acid chain; its full sequence is Phosphoenolpyruvate guanylyltransferase (240 aa).

Phosphoenolpyruvate is bound by residues Thr161, Gly178, and Ser181.

It belongs to the CofC family.

It carries out the reaction phosphoenolpyruvate + GTP + H(+) = enolpyruvoyl-2-diphospho-5'-guanosine + diphosphate. The protein operates within cofactor biosynthesis; coenzyme F420 biosynthesis. In terms of biological role, guanylyltransferase that catalyzes the activation of phosphoenolpyruvate (PEP) as enolpyruvoyl-2-diphospho-5'-guanosine, via the condensation of PEP with GTP. It is involved in the biosynthesis of coenzyme F420, a hydride carrier cofactor. The protein is Phosphoenolpyruvate guanylyltransferase of Rhodococcus opacus (strain B4).